Reading from the N-terminus, the 1430-residue chain is Gag-Pol polyprotein (1430 aa).

Glycine 2 carries N-myristoyl glycine; by host lipidation. Positions valine 7 to leucine 31 are interaction with Gp41. Residues leucine 8 to arginine 43 are interaction with host CALM1. The interval lysine 12 to isoleucine 19 is interaction with host AP3D1. The tract at residues aspartate 14–histidine 33 is interaction with membrane phosphatidylinositol 4,5-bisphosphate and RNA. The short motif at tryptophan 16–arginine 22 is the Nuclear export signal element. The Nuclear localization signal motif lies at lysine 26–lysine 32. The interval glutamate 73–serine 77 is interaction with membrane phosphatidylinositol 4,5-bisphosphate. At tyrosine 128 the chain carries Phosphotyrosine; by host. Residues asparagine 185–glutamine 223 form an interaction with human PPIA/CYPA and NUP153 region. The dimerization/Multimerization of capsid protein p24 stretch occupies residues tyrosine 273–leucine 359. CCHC-type zinc fingers lie at residues valine 385–alanine 402 and lysine 406–glutamate 423. The tract at residues glutamate 439–serine 480 is disordered. Residues serine 445 to serine 455 are compositionally biased toward polar residues. Positions proline 484–leucine 488 are dimerization of protease. The 70-residue stretch at arginine 503–leucine 572 folds into the Peptidase A2 domain. Aspartate 508 acts as the For protease activity; shared with dimeric partner in catalysis. Dimerization of protease stretches follow at residues glycine 532–lysine 538 and asparagine 571–proline 583. Residues glutamate 626–leucine 816 form the Reverse transcriptase domain. 3 residues coordinate Mg(2+): aspartate 692, aspartate 767, and aspartate 768. The interval phenylalanine 809–histidine 817 is RT 'primer grip'. A Tryptophan repeat motif motif is present at residues tryptophan 980–tryptophan 996. The RNase H type-1 domain maps to isoleucine 1016–arginine 1139. 4 residues coordinate Mg(2+): aspartate 1025, glutamate 1060, aspartate 1080, and aspartate 1131. The Integrase-type zinc finger occupies aspartate 1145–glutamine 1186. 4 residues coordinate Zn(2+): histidine 1154, histidine 1158, cysteine 1182, and cysteine 1185. The region spanning valine 1196–isoleucine 1346 is the Integrase catalytic domain. Aspartate 1206, aspartate 1258, and glutamate 1294 together coordinate Mg(2+). Positions phenylalanine 1365–aspartate 1412 form a DNA-binding region, integrase-type.

Homotrimer; further assembles as hexamers of trimers. Interacts with gp41 (via C-terminus). Interacts with host CALM1; this interaction induces a conformational change in the Matrix protein, triggering exposure of the myristate group. Interacts with host AP3D1; this interaction allows the polyprotein trafficking to multivesicular bodies during virus assembly. Part of the pre-integration complex (PIC) which is composed of viral genome, matrix protein, Vpr and integrase. As to quaternary structure, homodimer; the homodimer further multimerizes as homohexamers or homopentamers. Interacts with human PPIA/CYPA; This interaction stabilizes the capsid. Interacts with human NUP153. Interacts with host PDZD8; this interaction stabilizes the capsid. Interacts with monkey TRIM5; this interaction destabilizes the capsid. In terms of assembly, homodimer, whose active site consists of two apposed aspartic acid residues. Heterodimer of p66 RT and p51 RT (RT p66/p51). Heterodimerization of RT is essential for DNA polymerase activity. The overall folding of the subdomains is similar in p66 RT and p51 RT but the spatial arrangements of the subdomains are dramatically different. As to quaternary structure, homotetramer; may further associate as a homohexadecamer. Part of the pre-integration complex (PIC) which is composed of viral genome, matrix protein, Vpr and integrase. Interacts with human SMARCB1/INI1 and human PSIP1/LEDGF isoform 1. Interacts with human KPNA3; this interaction might play a role in nuclear import of the pre-integration complex. Interacts with human NUP153; this interaction might play a role in nuclear import of the pre-integration complex. The cofactor is Mg(2+). Specific enzymatic cleavages by the viral protease yield mature proteins. The protease is released by autocatalytic cleavage. The polyprotein is cleaved during and after budding, this process is termed maturation. Proteolytic cleavage of p66 RT removes the RNase H domain to yield the p51 RT subunit. Nucleocapsid protein p7 might be further cleaved after virus entry. Post-translationally, tyrosine phosphorylated presumably in the virion by a host kinase. Phosphorylation is apparently not a major regulator of membrane association. In terms of processing, phosphorylated possibly by host MAPK1; this phosphorylation is necessary for Pin1-mediated virion uncoating. Methylated by host PRMT6, impairing its function by reducing RNA annealing and the initiation of reverse transcription.

The protein resides in the host cell membrane. The protein localises to the host endosome. Its subcellular location is the host multivesicular body. It is found in the virion membrane. It localises to the host nucleus. The protein resides in the host cytoplasm. The protein localises to the virion. It catalyses the reaction Specific for a P1 residue that is hydrophobic, and P1' variable, but often Pro.. The catalysed reaction is Endohydrolysis of RNA in RNA/DNA hybrids. Three different cleavage modes: 1. sequence-specific internal cleavage of RNA. Human immunodeficiency virus type 1 and Moloney murine leukemia virus enzymes prefer to cleave the RNA strand one nucleotide away from the RNA-DNA junction. 2. RNA 5'-end directed cleavage 13-19 nucleotides from the RNA end. 3. DNA 3'-end directed cleavage 15-20 nucleotides away from the primer terminus.. It carries out the reaction 3'-end directed exonucleolytic cleavage of viral RNA-DNA hybrid.. The enzyme catalyses DNA(n) + a 2'-deoxyribonucleoside 5'-triphosphate = DNA(n+1) + diphosphate. Protease: The viral protease is inhibited by many synthetic protease inhibitors (PIs), such as amprenavir, atazanavir, indinavir, loprinavir, nelfinavir, ritonavir and saquinavir. Use of protease inhibitors in tritherapy regimens permit more ambitious therapeutic strategies. Reverse transcriptase/ribonuclease H: RT can be inhibited either by nucleoside RT inhibitors (NRTIs) or by non nucleoside RT inhibitors (NNRTIs). NRTIs act as chain terminators, whereas NNRTIs inhibit DNA polymerization by binding a small hydrophobic pocket near the RT active site and inducing an allosteric change in this region. Classical NRTIs are abacavir, adefovir (PMEA), didanosine (ddI), lamivudine (3TC), stavudine (d4T), tenofovir (PMPA), zalcitabine (ddC), and zidovudine (AZT). Classical NNRTIs are atevirdine (BHAP U-87201E), delavirdine, efavirenz (DMP-266), emivirine (I-EBU), and nevirapine (BI-RG-587). The tritherapies used as a basic effective treatment of AIDS associate two NRTIs and one NNRTI. In terms of biological role, mediates, with Gag polyprotein, the essential events in virion assembly, including binding the plasma membrane, making the protein-protein interactions necessary to create spherical particles, recruiting the viral Env proteins, and packaging the genomic RNA via direct interactions with the RNA packaging sequence (Psi). Gag-Pol polyprotein may regulate its own translation, by the binding genomic RNA in the 5'-UTR. At low concentration, the polyprotein would promote translation, whereas at high concentration, the polyprotein would encapsidate genomic RNA and then shut off translation. Functionally, targets the polyprotein to the plasma membrane via a multipartite membrane-binding signal, that includes its myristoylated N-terminus. Matrix protein is part of the pre-integration complex. Implicated in the release from host cell mediated by Vpu. Binds to RNA. Its function is as follows. Forms the conical core that encapsulates the genomic RNA-nucleocapsid complex in the virion. Most core are conical, with only 7% tubular. The core is constituted by capsid protein hexamer subunits. The core is disassembled soon after virion entry. Host restriction factors such as TRIM5-alpha or TRIMCyp bind retroviral capsids and cause premature capsid disassembly, leading to blocks in reverse transcription. Capsid restriction by TRIM5 is one of the factors which restricts HIV-1 to the human species. Host PIN1 apparently facilitates the virion uncoating. On the other hand, interactions with PDZD8 or CYPA stabilize the capsid. Encapsulates and protects viral dimeric unspliced genomic RNA (gRNA). Binds these RNAs through its zinc fingers. Acts as a nucleic acid chaperone which is involved in rearangement of nucleic acid secondary structure during gRNA retrotranscription. Also facilitates template switch leading to recombination. As part of the polyprotein, participates in gRNA dimerization, packaging, tRNA incorporation and virion assembly. In terms of biological role, aspartyl protease that mediates proteolytic cleavages of Gag and Gag-Pol polyproteins during or shortly after the release of the virion from the plasma membrane. Cleavages take place as an ordered, step-wise cascade to yield mature proteins. This process is called maturation. Displays maximal activity during the budding process just prior to particle release from the cell. Also cleaves Nef and Vif, probably concomitantly with viral structural proteins on maturation of virus particles. Hydrolyzes host EIF4GI and PABP1 in order to shut off the capped cellular mRNA translation. The resulting inhibition of cellular protein synthesis serves to ensure maximal viral gene expression and to evade host immune response. Also mediates cleavage of host YTHDF3. Mediates cleavage of host CARD8, thereby activating the CARD8 inflammasome, leading to the clearance of latent HIV-1 in patient CD4(+) T-cells after viral reactivation; in contrast, HIV-1 can evade CARD8-sensing when its protease remains inactive in infected cells prior to viral budding. Functionally, multifunctional enzyme that converts the viral RNA genome into dsDNA in the cytoplasm, shortly after virus entry into the cell. This enzyme displays a DNA polymerase activity that can copy either DNA or RNA templates, and a ribonuclease H (RNase H) activity that cleaves the RNA strand of RNA-DNA heteroduplexes in a partially processive 3' to 5' endonucleasic mode. Conversion of viral genomic RNA into dsDNA requires many steps. A tRNA(3)-Lys binds to the primer-binding site (PBS) situated at the 5'-end of the viral RNA. RT uses the 3' end of the tRNA primer to perform a short round of RNA-dependent minus-strand DNA synthesis. The reading proceeds through the U5 region and ends after the repeated (R) region which is present at both ends of viral RNA. The portion of the RNA-DNA heteroduplex is digested by the RNase H, resulting in a ssDNA product attached to the tRNA primer. This ssDNA/tRNA hybridizes with the identical R region situated at the 3' end of viral RNA. This template exchange, known as minus-strand DNA strong stop transfer, can be either intra- or intermolecular. RT uses the 3' end of this newly synthesized short ssDNA to perform the RNA-dependent minus-strand DNA synthesis of the whole template. RNase H digests the RNA template except for two polypurine tracts (PPTs) situated at the 5'-end and near the center of the genome. It is not clear if both polymerase and RNase H activities are simultaneous. RNase H probably can proceed both in a polymerase-dependent (RNA cut into small fragments by the same RT performing DNA synthesis) and a polymerase-independent mode (cleavage of remaining RNA fragments by free RTs). Secondly, RT performs DNA-directed plus-strand DNA synthesis using the PPTs that have not been removed by RNase H as primers. PPTs and tRNA primers are then removed by RNase H. The 3' and 5' ssDNA PBS regions hybridize to form a circular dsDNA intermediate. Strand displacement synthesis by RT to the PBS and PPT ends produces a blunt ended, linear dsDNA copy of the viral genome that includes long terminal repeats (LTRs) at both ends. Its function is as follows. Catalyzes viral DNA integration into the host chromosome, by performing a series of DNA cutting and joining reactions. This enzyme activity takes place after virion entry into a cell and reverse transcription of the RNA genome in dsDNA. The first step in the integration process is 3' processing. This step requires a complex comprising the viral genome, matrix protein, Vpr and integrase. This complex is called the pre-integration complex (PIC). The integrase protein removes 2 nucleotides from each 3' end of the viral DNA, leaving recessed CA OH's at the 3' ends. In the second step, the PIC enters cell nucleus. This process is mediated through integrase and Vpr proteins, and allows the virus to infect a non dividing cell. This ability to enter the nucleus is specific of lentiviruses, other retroviruses cannot and rely on cell division to access cell chromosomes. In the third step, termed strand transfer, the integrase protein joins the previously processed 3' ends to the 5' ends of strands of target cellular DNA at the site of integration. The 5'-ends are produced by integrase-catalyzed staggered cuts, 5 bp apart. A Y-shaped, gapped, recombination intermediate results, with the 5'-ends of the viral DNA strands and the 3' ends of target DNA strands remaining unjoined, flanking a gap of 5 bp. The last step is viral DNA integration into host chromosome. This involves host DNA repair synthesis in which the 5 bp gaps between the unjoined strands are filled in and then ligated. Since this process occurs at both cuts flanking the HIV genome, a 5 bp duplication of host DNA is produced at the ends of HIV-1 integration. Alternatively, Integrase may catalyze the excision of viral DNA just after strand transfer, this is termed disintegration. The sequence is that of Gag-Pol polyprotein (gag-pol) from Homo sapiens (Human).